The primary structure comprises 360 residues: MLTWLTQFSPHFQPLNLFRYITFRTGGATATALFFVFFFGPRIIAALRIKQGKGQPIRLDGPQSHLLTKKGTPTMGGLMILSGLIVSTLLWANLRNHYVWVVLFVTTGFGLIGFYDDYLKVSKQSHKGFPGRIRLLLEVGIAGAACYAMMLLGTPHTTSLAFPAINGFAVDLGLFFLVVGPFVIVSAGNAVNLTDGLDGLAIVPVMIAAGTFGVIAYLAGNAIFSTYLGINFVPGAGELSVVTGAVIGAGLGFLWFNAPPAQIFMGDTGSLALGGLLGAVAVAVKHEIVLAIVGGLFVLETLSVIVQVISFKLTGRRVFKMAPIHHHFEQLGWSEPQVVVRFWIIAFVLALIGLSTLKLR.

The next 10 membrane-spanning stretches (helical) occupy residues 27–47 (GATA…IAAL), 74–94 (TMGG…WANL), 99–119 (VWVV…DDYL), 135–155 (LLLE…LGTP), 165–185 (INGF…FVIV), 199–219 (GLAI…AYLA), 236–256 (AGEL…FLWF), 263–283 (IFMG…VAVA), 288–308 (IVLA…IVQV), and 337–357 (QVVV…LSTL).

It belongs to the glycosyltransferase 4 family. MraY subfamily. Mg(2+) is required as a cofactor.

The protein localises to the cell inner membrane. The catalysed reaction is UDP-N-acetyl-alpha-D-muramoyl-L-alanyl-gamma-D-glutamyl-meso-2,6-diaminopimeloyl-D-alanyl-D-alanine + di-trans,octa-cis-undecaprenyl phosphate = di-trans,octa-cis-undecaprenyl diphospho-N-acetyl-alpha-D-muramoyl-L-alanyl-D-glutamyl-meso-2,6-diaminopimeloyl-D-alanyl-D-alanine + UMP. It functions in the pathway cell wall biogenesis; peptidoglycan biosynthesis. In terms of biological role, catalyzes the initial step of the lipid cycle reactions in the biosynthesis of the cell wall peptidoglycan: transfers peptidoglycan precursor phospho-MurNAc-pentapeptide from UDP-MurNAc-pentapeptide onto the lipid carrier undecaprenyl phosphate, yielding undecaprenyl-pyrophosphoryl-MurNAc-pentapeptide, known as lipid I. This is Phospho-N-acetylmuramoyl-pentapeptide-transferase from Methylocella silvestris (strain DSM 15510 / CIP 108128 / LMG 27833 / NCIMB 13906 / BL2).